A 1166-amino-acid chain; its full sequence is Folliculin-interacting protein 1 (1166 aa).

A uDENN FNIP1/2-type domain is found at phenylalanine 37–isoleucine 478. Phosphoserine; by AMPK is present on residues serine 220, serine 230, serine 232, and serine 261. Threonine 294 carries the post-translational modification Phosphothreonine. Serine 296 is subject to Phosphoserine. The region spanning serine 486–glutamine 1092 is the cDENN FNIP1/2-type domain. At serine 593 the chain carries Phosphoserine; by AMPK. Serine 594 is subject to Phosphoserine. 2 residues coordinate Zn(2+): cysteine 608 and cysteine 610. Residues cysteine 608–histidine 615 carry the Cys degron motif. Positions lysine 611 to tyrosine 612 are KY-finger. Zn(2+)-binding residues include cysteine 613 and histidine 615. Phosphoserine occurs at positions 760 and 763. 2 disordered regions span residues threonine 781–glutamate 817 and leucine 912–threonine 956. Composition is skewed to basic and acidic residues over residues proline 783 to serine 805 and histidine 915 to isoleucine 925. The interaction with HSP90AA1 stretch occupies residues threonine 929–leucine 1166. Residue serine 938 is modified to Phosphoserine; alternate; by CK2. O-linked (GlcNAc) serine; alternate glycosylation occurs at serine 938. Serine 939, serine 941, serine 946, and serine 948 each carry phosphoserine; by CK2. The region spanning phenylalanine 1102–histidine 1157 is the dDENN FNIP1/2-type domain. Lysine 1119 participates in a covalent cross-link: Glycyl lysine isopeptide (Lys-Gly) (interchain with G-Cter in ubiquitin).

The protein belongs to the FNIP family. Homodimer and homomultimer. Heterodimer and heteromultimer with FNIP2. Interacts with FLCN (via C-terminus). Component of the lysosomal folliculin complex (LFC), composed of FLCN, FNIP1 (or FNIP2), RagA/RRAGA or RagB/RRAGB GDP-bound, RagC/RRAGC or RagD/RRAGD GTP-bound, and Ragulator. Interacts with HSPCA and with the PRKAA1, PRKAB1 and PRKAG1 subunits of 5'-AMP-activated protein kinase (AMPK). Phosphorylated FLCN and AMPK are preferentially bound. Interacts with HSP70, STIP1, PTGES3, CDC37, BRAF, GCR and CDK4. Interacts with HSP90AA1; the interaction inhibits HSP90AA1 ATPase activity. Interacts with ATP2A2. Phosphorylated by AMPK in response to energetic stress. Phosphorylation by AMPK in response to mitochondrial damage promotes inactivation of the non-canonical mTORC1 signaling, nuclear translocation of TFEB and TFE3, inducing transcription of lysosomal or autophagy genes. Sequential phosphorylation by CK2 promotes its gradual interaction with HSP90AA1/Hsp90. Priming phosphorylation at Ser-938 is followed by relay phosphorylation at Ser-939, Ser-941, Ser-946 and Ser-948, promoting its gradual interaction with HSP90AA1/Hsp90. This leads to incremental inhibition of HSP90AA1/Hsp90 ATPase activity and gradual activation of both kinase and non-kinase clients. Dephosphorylated by protein phosphatase 5 (PP5), promoting glycosylation by OGT. Post-translationally, glcNAcylation at Ser-938 by OGT following dephosphorylation by protein phosphatase 5 (PP5) promotes ubiquitination and degradation by the proteasome. In terms of processing, ubiquitinated through 'Lys-11' linkage of ubiquitin moieties at Lys-1119 following glycosylation by OGT, leading to its degradation by the proteasome. Ubiquitinated by the CRL2(FEM1B) complex in response to reductive stress: reductive stress causes reduction of the conserved Cys degron in FNIP1, followed by zinc-binding, zinc acting as a molecular glue for recognition by the CRL2(FEM1B) complex. Ubiquitination leads to FNIP1 degradation, and activation of mitochondria to recalibrate reactive oxygen species (ROS). Oxidation of the Cys degron in normal conditions promotes its stabilization by preventing recognition and ubiquitination by the CRL2(FEM1B) complex. Strong expression is found in the heart, liver placenta, muscle, nasal mucosa, salivary gland and uvula and moderate expression in kidney and lung. Higher levels detected in clear cell renal cell carcinoma (RCC) and chromophobe RCC than in normal kidney tissue. Expressed in peripheral blood mononuclear cells.

It localises to the lysosome membrane. The protein resides in the cytoplasm. It is found in the cytosol. Its function is as follows. Binding partner of the GTPase-activating protein FLCN: involved in the cellular response to amino acid availability by regulating the non-canonical mTORC1 signaling cascade controlling the MiT/TFE factors TFEB and TFE3. Required to promote FLCN recruitment to lysosomes and interaction with Rag GTPases, leading to activation of the non-canonical mTORC1 signaling. In low-amino acid conditions, component of the lysosomal folliculin complex (LFC) on the membrane of lysosomes, which inhibits the GTPase-activating activity of FLCN, thereby inactivating mTORC1 and promoting nuclear translocation of TFEB and TFE3. Upon amino acid restimulation, disassembly of the LFC complex liberates the GTPase-activating activity of FLCN, leading to activation of mTORC1 and subsequent inactivation of TFEB and TFE3. Together with FLCN, regulates autophagy: following phosphorylation by ULK1, interacts with GABARAP and promotes autophagy. In addition to its role in mTORC1 signaling, also acts as a co-chaperone of HSP90AA1/Hsp90: following gradual phosphorylation by CK2, inhibits the ATPase activity of HSP90AA1/Hsp90, leading to activate both kinase and non-kinase client proteins of HSP90AA1/Hsp90. Acts as a scaffold to load client protein FLCN onto HSP90AA1/Hsp90. Competes with the activating co-chaperone AHSA1 for binding to HSP90AA1, thereby providing a reciprocal regulatory mechanism for chaperoning of client proteins. Also acts as a core component of the reductive stress response by inhibiting activation of mitochondria in normal conditions: in response to reductive stress, the conserved Cys degron is reduced, leading to recognition and polyubiquitylation by the CRL2(FEM1B) complex, followed by proteasomal. Required for B-cell development. This Homo sapiens (Human) protein is Folliculin-interacting protein 1.